Reading from the N-terminus, the 248-residue chain is Granulin (248 aa).

Belongs to the polyhedrin family.

Component of the virus occlusion bodies, which are large proteinaceous structures, that protect the virus from the outside environment for extended periods until they are ingested by insect larvae. The sequence is that of Granulin from Trichoplusia ni (Cabbage looper).